The sequence spans 379 residues: Putative FBD-associated F-box protein At5g38570 (379 aa).

An F-box domain is found at 1–47 (MDNINGLPDDLLVKILSFVPTYVAVSTCVLSKRWEFLWMWLPNLEFV). Residues 295-345 (CWNQPSSVLECLLSSLKILNWSAYFGRPQDRDIAVYILKNACHLKTATFLT) form the FBD domain.

This is Putative FBD-associated F-box protein At5g38570 from Arabidopsis thaliana (Mouse-ear cress).